An 861-amino-acid polypeptide reads, in one-letter code: Leucine--tRNA ligase (861 aa).

The 'HIGH' region motif lies at 42–52 (PYPSGKLHMGH). The short motif at 620–624 (KMSKS) is the 'KMSKS' region element. Residue lysine 623 participates in ATP binding.

Belongs to the class-I aminoacyl-tRNA synthetase family.

It localises to the cytoplasm. It carries out the reaction tRNA(Leu) + L-leucine + ATP = L-leucyl-tRNA(Leu) + AMP + diphosphate. The polypeptide is Leucine--tRNA ligase (Buchnera aphidicola subsp. Schizaphis graminum (strain Sg)).